A 300-amino-acid polypeptide reads, in one-letter code: Cation-efflux pump FieF (300 aa).

The next 4 helical transmembrane spans lie at 12–32 (AALA…FAWW), 39–59 (ILAA…NLLV), 82–102 (AALA…LTGI), and 114–134 (PLVG…LVTF). Zn(2+) contacts are provided by D45 and D49. Positions 153 and 157 each coordinate Zn(2+). The next 2 helical transmembrane spans lie at 156 to 176 (SDVM…YGLH) and 182 to 202 (FALG…YEAI).

This sequence belongs to the cation diffusion facilitator (CDF) transporter (TC 2.A.4) family. FieF subfamily. Homodimer.

The protein resides in the cell inner membrane. It carries out the reaction Zn(2+)(in) + H(+)(out) = Zn(2+)(out) + H(+)(in). The enzyme catalyses Cd(2+)(in) + H(+)(out) = Cd(2+)(out) + H(+)(in). It catalyses the reaction Fe(2+)(in) + H(+)(out) = Fe(2+)(out) + H(+)(in). In terms of biological role, divalent metal cation transporter which exports Zn(2+), Cd(2+) and possibly Fe(2+). May be involved in zinc and iron detoxification by efflux. This chain is Cation-efflux pump FieF, found in Cronobacter sakazakii (strain ATCC BAA-894) (Enterobacter sakazakii).